Reading from the N-terminus, the 620-residue chain is MNLERLRKRVRQYLDQQQYQSALFWADKVASLSREEPQDIYWLAQCLYLTAQYHRAAHALRSRKLDKLYEACRYLAARCHYAAKEHQQALDVLDMEEPINKRLFEKYLKDESGFKDPSSDWEMSQSSIKSSICLLRGKIYDALDNRTLATYSYKEALKLDVYCFEAFDLLTSHHMLTAQEEKELLESLPLSKLCNEEQELLRFLFENKLKKYNKPSETVIPESVDGLQENLDVVVSLAERHYYNCDFKMCYKLTSVVMEKDPFHASCLPVHIGTLVELNKANELFYLSHKLVDLYPSNPVSWFAVGCYYLMVGHKNEHARRYLSKATTLEKTYGPAWIAYGHSFAVESEHDQAMAAYFTAAQLMKGCHLPMLYIGLEYGLTNNSKLAERFFSQALSIAPEDPFVMHEVGVVAFQNGEWKTAEKWFLDALEKIKAIGNEVTVDKWEPLLNNLGHVCRKLKKYAEALDYHRQALVLIPQNASTYSAIGYIHSLMGNFENAVDYFHTALGLRRDDTFSVTMLGHCIEMYIGDSEAYIGADIKDKLKCYDFDVHTMKTLKNIISPPWDFREFEVEKQTAEETGLTPLETSRKTPDSRPSLEETFEIEMNESDMMLETSMSDHST.

TPR repeat units follow at residues 4–33 (ERLR…ASLS), 37–62 (PQDI…ALRS), and 70–93 (EACR…LDVL). Ser112 bears the Phosphoserine mark. TPR repeat units follow at residues 128 to 159 (IKSS…ALKL), 164 to 187 (FEAF…LLES), 198 to 222 (QELL…VIPE), 232 to 260 (DVVV…VMEK), 267 to 294 (CLPV…LVDL), 299 to 329 (PVSW…ATTL), 334 to 362 (GPAW…TAAQ), 369 to 397 (LPML…ALSI), 402 to 434 (PFVM…KIKA), 442 to 474 (DKWE…ALVL), and 479 to 508 (ASTY…ALGL). Ser490 and Ser560 each carry phosphoserine. The segment at 574-599 (TAEETGLTPLETSRKTPDSRPSLEET) is disordered. Thr581 bears the Phosphothreonine mark. Over residues 585-596 (TSRKTPDSRPSL) the composition is skewed to basic and acidic residues. At Ser595 the chain carries Phosphoserine. Thr599 is modified (phosphothreonine).

Belongs to the APC6/CDC16 family. In terms of assembly, V-shaped homodimer. The mammalian APC/C is composed at least of 14 distinct subunits ANAPC1, ANAPC2, CDC27/APC3, ANAPC4, ANAPC5, CDC16/APC6, ANAPC7, CDC23/APC8, ANAPC10, ANAPC11, CDC26/APC12, ANAPC13, ANAPC15 and ANAPC16 that assemble into a complex of at least 19 chains with a combined molecular mass of around 1.2 MDa; APC/C interacts with FZR1 and FBXO5. Interacts with PPP5C and CDC20. Interacts with CDC26. Interacts with FBXO43. Phosphorylated. Phosphorylation on Ser-560 occurs specifically during mitosis.

It localises to the cytoplasm. Its subcellular location is the cytoskeleton. The protein resides in the microtubule organizing center. It is found in the centrosome. The protein localises to the spindle. Its pathway is protein modification; protein ubiquitination. Component of the anaphase promoting complex/cyclosome (APC/C), a cell cycle-regulated E3 ubiquitin ligase that controls progression through mitosis and the G1 phase of the cell cycle. The APC/C complex acts by mediating ubiquitination and subsequent degradation of target proteins: it mainly mediates the formation of 'Lys-11'-linked polyubiquitin chains and, to a lower extent, the formation of 'Lys-48'- and 'Lys-63'-linked polyubiquitin chains. The APC/C complex catalyzes assembly of branched 'Lys-11'-/'Lys-48'-linked branched ubiquitin chains on target proteins. This Homo sapiens (Human) protein is Cell division cycle protein 16 homolog (CDC16).